A 178-amino-acid polypeptide reads, in one-letter code: MNATPAVADDLIVIGKIYSVHGVRGEVKVYSFTDPTENLLQYKTWTLKREGSVKQVELVSGRGSDKFLVAKLKGLDDREEARLLAGYEICVPRNLFPELTDGEYYWYQLEGLKVIDQLGQLFGKIDHLLETGANDVMVVKPCAGSLDDRERLLPYTKQCVLAVDLEAGEMKVEWDADF.

Positions 100–178 (TDGEYYWYQL…EMKVEWDADF (79 aa)) constitute a PRC barrel domain.

This sequence belongs to the RimM family. As to quaternary structure, binds ribosomal protein uS19.

The protein resides in the cytoplasm. Its function is as follows. An accessory protein needed during the final step in the assembly of 30S ribosomal subunit, possibly for assembly of the head region. Essential for efficient processing of 16S rRNA. May be needed both before and after RbfA during the maturation of 16S rRNA. It has affinity for free ribosomal 30S subunits but not for 70S ribosomes. This chain is Ribosome maturation factor RimM, found in Pseudomonas fluorescens (strain SBW25).